Here is a 496-residue protein sequence, read N- to C-terminus: GTPase Der (496 aa).

2 consecutive EngA-type G domains span residues Pro3–Lys168 and Ile210–Thr383. GTP-binding positions include Gly9 to Ser16, Asp56 to Ile60, Asn120 to Asp123, Gly216 to Ser223, Asp263 to Val267, and Asn328 to Asp331. The KH-like domain occupies Lys384 to Glu468.

Belongs to the TRAFAC class TrmE-Era-EngA-EngB-Septin-like GTPase superfamily. EngA (Der) GTPase family. As to quaternary structure, associates with the 50S ribosomal subunit.

Its function is as follows. GTPase that plays an essential role in the late steps of ribosome biogenesis. The protein is GTPase Der of Hamiltonella defensa subsp. Acyrthosiphon pisum (strain 5AT).